The chain runs to 413 residues: MNIYAVGGAIRDDLLGVPVQDRDYVVVGATPEQMVAQGFRPVGKDFPVFLHPDTQEEYALARTERKTAAGYHGFQFYFAPDVTLDEDLARRDLTINAMAREVSPEGALVGPVIDPFDGQADLHARVFRHVGDAFVEDPVRILRIARFAARFADFTVADDTLALMRRMVDAGEADALVAERVWQEIARGLMEAKPSRMFAVLRECGALARVLPEVDALWGVPQRADYHPEVDTGVHVMMVVDYAAKQGYSLPVRFAALTHDLGKATTPADVLPRHVGHEGRSVELIKPLCERLRVPNECRDLALVVAREHGNLHRVMEMGAAALVRFFERSDALRKPARFAEMLQACESDARGRLGLDTQPYPQAERLRVALVAARSVDAGAIARGVGDDVMQIKDAVHRARVEAVKQALAIGE.

Residues G8 and R11 each contribute to the ATP site. The CTP site is built by G8 and R11. 2 residues coordinate Mg(2+): D21 and D23. ATP-binding residues include R91, R143, and R146. CTP is bound by residues R91, R143, and R146. The 102-residue stretch at 232–333 (TGVHVMMVVD…VRFFERSDAL (102 aa)) folds into the HD domain.

It belongs to the tRNA nucleotidyltransferase/poly(A) polymerase family. Bacterial CCA-adding enzyme type 1 subfamily. As to quaternary structure, monomer. Can also form homodimers and oligomers. Requires Mg(2+) as cofactor. Ni(2+) serves as cofactor.

It catalyses the reaction a tRNA precursor + 2 CTP + ATP = a tRNA with a 3' CCA end + 3 diphosphate. The catalysed reaction is a tRNA with a 3' CCA end + 2 CTP + ATP = a tRNA with a 3' CCACCA end + 3 diphosphate. Catalyzes the addition and repair of the essential 3'-terminal CCA sequence in tRNAs without using a nucleic acid template. Adds these three nucleotides in the order of C, C, and A to the tRNA nucleotide-73, using CTP and ATP as substrates and producing inorganic pyrophosphate. tRNA 3'-terminal CCA addition is required both for tRNA processing and repair. Also involved in tRNA surveillance by mediating tandem CCA addition to generate a CCACCA at the 3' terminus of unstable tRNAs. While stable tRNAs receive only 3'-terminal CCA, unstable tRNAs are marked with CCACCA and rapidly degraded. The protein is Multifunctional CCA protein of Burkholderia ambifaria (strain ATCC BAA-244 / DSM 16087 / CCUG 44356 / LMG 19182 / AMMD) (Burkholderia cepacia (strain AMMD)).